Here is an 87-residue protein sequence, read N- to C-terminus: U3-theraphotoxin-Hhn1h (87 aa).

The N-terminal stretch at 1–24 is a signal peptide; sequence MVNMKASMFLTFAGLVLLFVVCYA. A propeptide spanning residues 25–52 is cleaved from the precursor; it reads SESEEKEFPKEMLSSIFAVDNDSKQEER. Disulfide bonds link cysteine 54/cysteine 67, cysteine 61/cysteine 72, and cysteine 66/cysteine 79.

Belongs to the neurotoxin 10 (Hwtx-1) family. 51 (Hntx-8) subfamily. Hntx-8 sub-subfamily. Expressed by the venom gland.

The protein resides in the secreted. Functionally, ion channel inhibitor. The protein is U3-theraphotoxin-Hhn1h of Cyriopagopus hainanus (Chinese bird spider).